We begin with the raw amino-acid sequence, 129 residues long: Follitropin subunit beta (129 aa).

A signal peptide spans 1–18 (MKTLQFFFLFCCWKAICC). Intrachain disulfides connect C21/C69, C35/C84, C38/C122, C46/C100, C50/C102, and C105/C112. Residues N25 and N42 are each glycosylated (N-linked (GlcNAc...) asparagine).

This sequence belongs to the glycoprotein hormones subunit beta family. Heterodimer. The active follitropin is a heterodimer composed of an alpha chain/CGA shared with other hormones and a unique beta chain/FSHB shown here.

It is found in the secreted. In terms of biological role, together with the alpha chain CGA constitutes follitropin, the follicle-stimulating hormone, and provides its biological specificity to the hormone heterodimer. Binds FSHR, a G protein-coupled receptor, on target cells to activate downstream signaling pathways. Follitropin is involved in follicle development and spermatogenesis in reproductive organs. The sequence is that of Follitropin subunit beta (FSHB) from Homo sapiens (Human).